The primary structure comprises 240 residues: Citrate synthase-lysine N-methyltransferase CSKMT, mitochondrial (240 aa).

The N-terminal 28 residues, 1 to 28 (MAALRRMLHLPSLMMGTCRPFAGSLADS), are a transit peptide targeting the mitochondrion.

It belongs to the methyltransferase superfamily.

The protein localises to the mitochondrion. The catalysed reaction is L-lysyl-[citrate synthase] + S-adenosyl-L-methionine = N(6)-methyl-L-lysyl-[citrate synthase] + S-adenosyl-L-homocysteine + H(+). The enzyme catalyses N(6)-methyl-L-lysyl-[citrate synthase] + S-adenosyl-L-methionine = N(6),N(6)-dimethyl-L-lysyl-[citrate synthase] + S-adenosyl-L-homocysteine + H(+). It carries out the reaction N(6),N(6)-dimethyl-L-lysyl-[citrate synthase] + S-adenosyl-L-methionine = N(6),N(6),N(6)-trimethyl-L-lysyl-[citrate synthase] + S-adenosyl-L-homocysteine + H(+). Citrate synthase-lysine methyltransferase activity is inhibited by S-adenosylhomocysteine (AdoHcy) and oxaloacetate (OAA). Its function is as follows. Protein-lysine methyltransferase that selectively trimethylates citrate synthase (CS) in mitochondria. Seems to conduct trimethylation in a highly distributive manner rather than in a processive manner, and thus introduces a single methyl group per binding event. The chain is Citrate synthase-lysine N-methyltransferase CSKMT, mitochondrial from Homo sapiens (Human).